The sequence spans 568 residues: MKQSKMFIPTLREVPSDADSKSHQLLLKAGMIKQVASGVYSYLPIAKRVLNKIESIVREEMEAIDGVEILMPALQPSELWSESGRWQSYGAELMRMTDRHGREFALGPTHEEIITSLVRDELKSYKKLPVTLFQIQNKFRDEKRPRFGLLRGREFIMKDAYSFHATEASLDETYQDMYNAYSKIFSRLNLQFRPVIADSGAIGGSHTHEFMALAEIGEDTICYTDGSDYAANIEKAEVVYHPNKKHTEENVLEKVHTPGVKTAQQLADFLKRDLDEIVKSMIVKVDDQFVMFLIRGHHELNDIKVKSFFGTEHVEMATDDDIRSILDASPGSLGPVGVNKIDIYADNSVQDLNNLAVGANEDDYHYVNANVDRDFNVKAYGDFRFILEGEPAADGSGPVKFAEGIEIGQVFKLGTKYSESMNATFLNDQGRAEPMIMGCYGIGVSRTLSAVIEQHNDDKGIIWPTAITPYEVHIISVNPKQEVQKNLADQLYDTYRTQYEVLYDDRAERAGVKFNDADLIGIPVRVVVGKQAADGIVEVKNRRTGDAVEVHIDNLQETIQSIYASFES.

It belongs to the class-II aminoacyl-tRNA synthetase family. ProS type 1 subfamily. In terms of assembly, homodimer.

The protein localises to the cytoplasm. It carries out the reaction tRNA(Pro) + L-proline + ATP = L-prolyl-tRNA(Pro) + AMP + diphosphate. In terms of biological role, catalyzes the attachment of proline to tRNA(Pro) in a two-step reaction: proline is first activated by ATP to form Pro-AMP and then transferred to the acceptor end of tRNA(Pro). As ProRS can inadvertently accommodate and process non-cognate amino acids such as alanine and cysteine, to avoid such errors it has two additional distinct editing activities against alanine. One activity is designated as 'pretransfer' editing and involves the tRNA(Pro)-independent hydrolysis of activated Ala-AMP. The other activity is designated 'posttransfer' editing and involves deacylation of mischarged Ala-tRNA(Pro). The misacylated Cys-tRNA(Pro) is not edited by ProRS. The chain is Proline--tRNA ligase from Macrococcus caseolyticus (strain JCSC5402) (Macrococcoides caseolyticum).